The following is a 341-amino-acid chain: tRNA (cytidine(56)-2'-O)-methyltransferase (341 aa).

S-adenosyl-L-methionine is bound by residues Leu79 and 104-108 (GAEKV). Residues 187-294 (IIRHVETVYK…VAHADNLVSM (108 aa)) form the HD domain.

It belongs to the aTrm56 family. Homodimer.

The protein resides in the cytoplasm. The catalysed reaction is cytidine(56) in tRNA + S-adenosyl-L-methionine = 2'-O-methylcytidine(56) in tRNA + S-adenosyl-L-homocysteine + H(+). In terms of biological role, specifically catalyzes the AdoMet-dependent 2'-O-ribose methylation of cytidine at position 56 in tRNAs. The chain is tRNA (cytidine(56)-2'-O)-methyltransferase from Picrophilus torridus (strain ATCC 700027 / DSM 9790 / JCM 10055 / NBRC 100828 / KAW 2/3).